A 332-amino-acid polypeptide reads, in one-letter code: Super small secreted glycoprotein (332 aa).

Residues 1–33 (MGSGYQLLQLPRERFRKTSFLVWVIILFQRAIS) form the signal peptide. The N-linked (GlcNAc...) asparagine; by host glycan is linked to asparagine 41. 2 disulfides stabilise this stretch: cysteine 109–cysteine 136 and cysteine 122–cysteine 148. N-linked (GlcNAc...) asparagine; by host glycosylation is found at asparagine 205, asparagine 229, asparagine 239, asparagine 258, and asparagine 269.

Belongs to the filoviruses glycoprotein family.

Its subcellular location is the secreted. The sequence is that of Super small secreted glycoprotein (GP) from Reston ebolavirus (strain Reston-89) (REBOV).